The sequence spans 120 residues: Ribosome-binding factor A (120 aa).

Belongs to the RbfA family. As to quaternary structure, monomer. Binds 30S ribosomal subunits, but not 50S ribosomal subunits or 70S ribosomes.

It is found in the cytoplasm. Functionally, one of several proteins that assist in the late maturation steps of the functional core of the 30S ribosomal subunit. Associates with free 30S ribosomal subunits (but not with 30S subunits that are part of 70S ribosomes or polysomes). Required for efficient processing of 16S rRNA. May interact with the 5'-terminal helix region of 16S rRNA. The polypeptide is Ribosome-binding factor A (Borrelia garinii subsp. bavariensis (strain ATCC BAA-2496 / DSM 23469 / PBi) (Borreliella bavariensis)).